We begin with the raw amino-acid sequence, 428 residues long: MALRGEGRKRKKGQERRQSSEDDVGNAATDYLVGQVADSLRGGARPPGGGTGRLAALFSTPETLAPPVFVPVPQETSKKRKPDDEEETVAHIKKPALQEPARKVKVKKLSDADKRLANRESALANADLEEIRQDQGQGRRRSQSRGKVTDGEALDVALSLNEDGRQRTKVPLNPEEERLKNERTVFVGNLPVTCNKKKLKSFFKEYGQVESVRFRSVMPAEGTLSKKLAAIKRKFHPDQKSINAYVVFKEERAAAKALQRNGAQIAEGFRIRVDLASETASRDKRSVFVGNLPYRVDESALEEHFLDCGSIVAVRIVRNPLTGVGRGFGYVLFENTDAVHLALKLNNSELMGRKLRVMRSVNKEKLKQQNSNPSVKKDGSKSKQRLNFTSKEGKSHSKNAFIGEKAVLMKKKKGQKKKGQTKKPRKQK.

Disordered regions lie at residues M1–V106 and D127–E152. Residue K147 is modified to N6-acetyllysine. RRM domains are found at residues R183 to E278 and R285 to N362. Residue K240 forms a Glycyl lysine isopeptide (Lys-Gly) (interchain with G-Cter in SUMO2) linkage. S286 is modified (phosphoserine). The interval V361–K428 is disordered. Residues L408–K428 show a composition bias toward basic residues.

Belongs to the RRM RBM34 family.

Its subcellular location is the nucleus. It is found in the nucleolus. This chain is RNA-binding protein 34 (Rbm34), found in Rattus norvegicus (Rat).